The following is a 1103-amino-acid chain: Kinesin-like protein KIF1C (1103 aa).

One can recognise a Kinesin motor domain in the interval Ser-5–Ile-348. Gly-97 to Ser-104 lines the ATP pocket. Ser-295 is subject to Phosphoserine. Coiled-coil stretches lie at residues Asn-359–Glu-388 and Glu-438–Met-479. The tract at residues Ala-400–Glu-438 is disordered. Ser-494 is modified (phosphoserine). One can recognise an FHA domain in the interval Thr-523–Gly-590. A coiled-coil region spans residues Glu-633–Ser-674. A phosphoserine mark is found at Ser-674 and Ser-676. 3 disordered regions span residues Gly-808 to Ala-828, Leu-874 to Val-924, and Gln-950 to Val-1103. Gly residues predominate over residues Gly-813–Glu-822. Residues Ala-828–Ile-872 adopt a coiled-coil conformation. Residues Pro-893–Ser-910 are compositionally biased toward low complexity. Phosphoserine is present on Ser-915. The segment covering Gln-953 to Leu-962 has biased composition (gly residues). Over residues Pro-1021 to Arg-1031 the composition is skewed to basic residues. The residue at position 1033 (Ser-1033) is a Phosphoserine. An Omega-N-methylarginine modification is found at Arg-1041. The segment covering Pro-1062 to Thr-1083 has biased composition (pro residues). Thr-1083 is subject to Phosphothreonine. The residue at position 1092 (Ser-1092) is a Phosphoserine. Residues Ser-1092–Val-1103 show a composition bias toward basic and acidic residues.

Belongs to the TRAFAC class myosin-kinesin ATPase superfamily. Kinesin family. Unc-104 subfamily. As to quaternary structure, monomer. Interacts with BICD2. In terms of processing, phosphorylated on tyrosine residues. As to expression, expressed in all tissues examined, with most abundant expression in heart and skeletal muscle.

The protein localises to the cytoplasm. The protein resides in the cytoskeleton. In terms of biological role, motor required for the retrograde transport of Golgi vesicles to the endoplasmic reticulum. Has a microtubule plus end-directed motility. The chain is Kinesin-like protein KIF1C (KIF1C) from Homo sapiens (Human).